The primary structure comprises 397 residues: L-cysteine desulfidase (397 aa).

C23 serves as the catalytic Proton acceptor. The [4Fe-4S] cluster site is built by C288, C330, and C337.

It belongs to the L-cysteine desulfidase family. As to quaternary structure, homotrimer. The cofactor is [4Fe-4S] cluster.

It catalyses the reaction L-cysteine + H2O = hydrogen sulfide + pyruvate + NH4(+) + H(+). In terms of biological role, catalyzes the cleavage of L-cysteine to form 2-aminoprop-2-enoate and sulfide. The former then spontaneously hydrolyzes to pyruvate and NH(3). May be responsible for the production of sulfide required for the biosynthesis of iron-sulfur centers in this archaea. This is L-cysteine desulfidase from Methanococcus maripaludis (strain C7 / ATCC BAA-1331).